The chain runs to 728 residues: Ophiobolin F synthase oblA (728 aa).

The segment at methionine 1–glutamate 322 is (7Z)-ophiobola-7,19-dien-3-ol synthase. Aspartate 93 and aspartate 97 together coordinate Mg(2+). Residue aspartate 93 participates in substrate binding. Positions aspartate 93 to aspartate 97 match the DDXXD 1 motif. Residues arginine 182–aspartate 185, asparagine 226, serine 230–glutamate 234, and arginine 313–tyrosine 314 contribute to the substrate site. An NSE/DTE motif is present at residues asparagine 226–glutamate 234. The tract at residues leucine 323 to valine 728 is geranylfarnesyl diphosphate synthase. The segment covering glycine 362–glycine 371 has biased composition (low complexity). Positions glycine 362–proline 394 are disordered. Isopentenyl diphosphate-binding residues include lysine 439, arginine 442, and histidine 471. The Mg(2+) site is built by aspartate 478 and aspartate 482. The short motif at aspartate 478–aspartate 482 is the DDXXD 2 element. Residue arginine 487 coordinates dimethylallyl diphosphate. Arginine 488 lines the isopentenyl diphosphate pocket. Positions 565, 566, 604, 611, 621, and 631 each coordinate dimethylallyl diphosphate.

It in the N-terminal section; belongs to the terpene synthase family. In the C-terminal section; belongs to the FPP/GGPP synthase family. Requires Mg(2+) as cofactor.

It carries out the reaction isopentenyl diphosphate + (2E,6E)-farnesyl diphosphate = (2E,6E,10E)-geranylgeranyl diphosphate + diphosphate. It catalyses the reaction isopentenyl diphosphate + (2E,6E,10E)-geranylgeranyl diphosphate = (2E,6E,10E,14E)-geranylfarnesyl diphosphate + diphosphate. The enzyme catalyses (2E,6E,10E,14E)-geranylfarnesyl diphosphate + H2O = ophiobolin F + diphosphate. It functions in the pathway secondary metabolite biosynthesis; terpenoid biosynthesis. Bifunctional sesterterpene synthase; part of the gene cluster that mediates the biosynthesis of the sesterterpenes ophiobolins, fungal phytotoxins with potential anti-cancer activities. The first step of the pathway is performed by the sesterterpene synthase oblA that possesses both prenyl transferase and terpene cyclase activity, converting isopentenyl diphosphate and dimethylallyl diphosphate into geranylfarnesyl diphosphate (GFPP) and further converting GFPP into ophiobolin F, respectively. Other sesterterpenoids (C(25) terpenoids) are found as minor products of oblA. The cytochrome P450 monooxygenase oblB then catalyzes a four-step oxidative transformation of ophiobolin F to yield ophiobolin C. The function of the cytochrome P450 monooxygenase oblE has still to be determined. This chain is Ophiobolin F synthase oblA, found in Emericella variicolor (Aspergillus stellatus).